Here is a 691-residue protein sequence, read N- to C-terminus: DNA ligase (691 aa).

NAD(+)-binding positions include 41–45 (DAEYD), 90–91 (SL), and Glu130. The N6-AMP-lysine intermediate role is filled by Lys132. Positions 153, 190, 307, and 331 each coordinate NAD(+). Residues Cys425, Cys428, Cys443, and Cys449 each contribute to the Zn(2+) site. The 82-residue stretch at 610–691 (APQGVLAGKT…MHTLLEGHAR (82 aa)) folds into the BRCT domain.

It belongs to the NAD-dependent DNA ligase family. LigA subfamily. Requires Mg(2+) as cofactor. Mn(2+) serves as cofactor.

The catalysed reaction is NAD(+) + (deoxyribonucleotide)n-3'-hydroxyl + 5'-phospho-(deoxyribonucleotide)m = (deoxyribonucleotide)n+m + AMP + beta-nicotinamide D-nucleotide.. Its function is as follows. DNA ligase that catalyzes the formation of phosphodiester linkages between 5'-phosphoryl and 3'-hydroxyl groups in double-stranded DNA using NAD as a coenzyme and as the energy source for the reaction. It is essential for DNA replication and repair of damaged DNA. The chain is DNA ligase from Burkholderia pseudomallei (strain 1710b).